The sequence spans 394 residues: NAD(P)H-quinone oxidoreductase subunit H (394 aa).

It belongs to the complex I 49 kDa subunit family. As to quaternary structure, NDH-1 can be composed of about 15 different subunits; different subcomplexes with different compositions have been identified which probably have different functions.

It is found in the cellular thylakoid membrane. It catalyses the reaction a plastoquinone + NADH + (n+1) H(+)(in) = a plastoquinol + NAD(+) + n H(+)(out). The catalysed reaction is a plastoquinone + NADPH + (n+1) H(+)(in) = a plastoquinol + NADP(+) + n H(+)(out). Its function is as follows. NDH-1 shuttles electrons from an unknown electron donor, via FMN and iron-sulfur (Fe-S) centers, to quinones in the respiratory and/or the photosynthetic chain. The immediate electron acceptor for the enzyme in this species is believed to be plastoquinone. Couples the redox reaction to proton translocation, and thus conserves the redox energy in a proton gradient. Cyanobacterial NDH-1 also plays a role in inorganic carbon-concentration. The polypeptide is NAD(P)H-quinone oxidoreductase subunit H (Thermosynechococcus vestitus (strain NIES-2133 / IAM M-273 / BP-1)).